Here is a 240-residue protein sequence, read N- to C-terminus: UDP-2,3-diacylglucosamine hydrolase (240 aa).

Residues Asp8, His10, Asp41, Asn79, and His114 each contribute to the Mn(2+) site. 79–80 lines the substrate pocket; that stretch reads NR. Residues Asp122, Ser160, Asn164, Lys167, and His195 each coordinate substrate. His195 and His197 together coordinate Mn(2+).

It belongs to the LpxH family. Mn(2+) serves as cofactor.

It is found in the cell inner membrane. Its subcellular location is the cytoplasm. It carries out the reaction UDP-2-N,3-O-bis[(3R)-3-hydroxytetradecanoyl]-alpha-D-glucosamine + H2O = 2-N,3-O-bis[(3R)-3-hydroxytetradecanoyl]-alpha-D-glucosaminyl 1-phosphate + UMP + 2 H(+). It participates in glycolipid biosynthesis; lipid IV(A) biosynthesis; lipid IV(A) from (3R)-3-hydroxytetradecanoyl-[acyl-carrier-protein] and UDP-N-acetyl-alpha-D-glucosamine: step 4/6. Inhibited by a sulfonyl piperazine compound that shows antibacterial activity against E.coli; LpxH is the cellular target of this compound. Inhibited by 0.01% (or more) Triton X-100 in vitro. Hydrolyzes the pyrophosphate bond of UDP-2,3-diacylglucosamine to yield 2,3-diacylglucosamine 1-phosphate (lipid X) and UMP by catalyzing the attack of water at the alpha-P atom. Involved in the biosynthesis of lipid A, a phosphorylated glycolipid that anchors the lipopolysaccharide to the outer membrane of the cell. Is essential for E.coli growth. Does not cleave the unacylated UDP-GlcNAc, the mono-acylated UDP-3-O-(R)-3-hydroxymyristoyl-GlcNAc, and CDP-diacylglycerol. The polypeptide is UDP-2,3-diacylglucosamine hydrolase (Escherichia coli (strain K12)).